A 704-amino-acid polypeptide reads, in one-letter code: Elongation factor G (704 aa).

The 283-residue stretch at 8-290 (ARYRNIGISA…AVIDYLPSPV (283 aa)) folds into the tr-type G domain. GTP is bound by residues 17 to 24 (AHIDAGKT), 88 to 92 (DTPGH), and 142 to 145 (NKMD). N6-acetyllysine is present on residues lysine 504 and lysine 643.

Belongs to the TRAFAC class translation factor GTPase superfamily. Classic translation factor GTPase family. EF-G/EF-2 subfamily.

It is found in the cytoplasm. Functionally, catalyzes the GTP-dependent ribosomal translocation step during translation elongation. During this step, the ribosome changes from the pre-translocational (PRE) to the post-translocational (POST) state as the newly formed A-site-bound peptidyl-tRNA and P-site-bound deacylated tRNA move to the P and E sites, respectively. Catalyzes the coordinated movement of the two tRNA molecules, the mRNA and conformational changes in the ribosome. This is Elongation factor G from Escherichia coli O17:K52:H18 (strain UMN026 / ExPEC).